The following is a 105-amino-acid chain: Putative membrane protein insertion efficiency factor (105 aa).

The protein belongs to the UPF0161 family.

The protein localises to the cell inner membrane. In terms of biological role, could be involved in insertion of integral membrane proteins into the membrane. The polypeptide is Putative membrane protein insertion efficiency factor (Nitratidesulfovibrio vulgaris (strain DSM 19637 / Miyazaki F) (Desulfovibrio vulgaris)).